Reading from the N-terminus, the 412-residue chain is GTPase Obg (412 aa).

Positions 1-159 constitute an Obg domain; the sequence is MKFLDQAKIF…RWIWLRLKMI (159 aa). Positions 160–327 constitute an OBG-type G domain; that stretch reads ADAGLVGLPN…ILARLFTHIR (168 aa). GTP is bound by residues 166–173, 191–195, 212–215, 279–282, and 308–310; these read GLPNAGKS, FTTLH, DIPG, NKCD, and SGV. Mg(2+)-binding residues include S173 and T193. The tract at residues 335 to 412 is disordered; the sequence is AVPAASPIFG…ADDEEDDAEE (78 aa). Residues 385–412 show a composition bias toward acidic residues; that stretch reads NDGDEVDEDYDDEDLEEVADDEEDDAEE.

This sequence belongs to the TRAFAC class OBG-HflX-like GTPase superfamily. OBG GTPase family. Monomer. The cofactor is Mg(2+).

Its subcellular location is the cytoplasm. Functionally, an essential GTPase which binds GTP, GDP and possibly (p)ppGpp with moderate affinity, with high nucleotide exchange rates and a fairly low GTP hydrolysis rate. Plays a role in control of the cell cycle, stress response, ribosome biogenesis and in those bacteria that undergo differentiation, in morphogenesis control. This chain is GTPase Obg, found in Paramagnetospirillum magneticum (strain ATCC 700264 / AMB-1) (Magnetospirillum magneticum).